Consider the following 260-residue polypeptide: Thiazole synthase (260 aa).

Lys-100 acts as the Schiff-base intermediate with DXP in catalysis. Residues Gly-161, 187 to 188 (AG), and 209 to 210 (NT) each bind 1-deoxy-D-xylulose 5-phosphate.

Belongs to the ThiG family. In terms of assembly, homotetramer. Forms heterodimers with either ThiH or ThiS.

The protein resides in the cytoplasm. It carries out the reaction [ThiS sulfur-carrier protein]-C-terminal-Gly-aminoethanethioate + 2-iminoacetate + 1-deoxy-D-xylulose 5-phosphate = [ThiS sulfur-carrier protein]-C-terminal Gly-Gly + 2-[(2R,5Z)-2-carboxy-4-methylthiazol-5(2H)-ylidene]ethyl phosphate + 2 H2O + H(+). The protein operates within cofactor biosynthesis; thiamine diphosphate biosynthesis. Catalyzes the rearrangement of 1-deoxy-D-xylulose 5-phosphate (DXP) to produce the thiazole phosphate moiety of thiamine. Sulfur is provided by the thiocarboxylate moiety of the carrier protein ThiS. In vitro, sulfur can be provided by H(2)S. This chain is Thiazole synthase, found in Sorangium cellulosum (strain So ce56) (Polyangium cellulosum (strain So ce56)).